Reading from the N-terminus, the 583-residue chain is Aspartate--tRNA ligase (583 aa).

Glu-174 is an L-aspartate binding site. Residues 198–201 (QITK) are aspartate. Residue Arg-220 coordinates L-aspartate. Residues 220–222 (RDE) and Gln-229 contribute to the ATP site. His-443 is a binding site for L-aspartate. ATP is bound at residue Glu-477. Arg-484 is an L-aspartate binding site. 529–532 (GLDR) contributes to the ATP binding site.

It belongs to the class-II aminoacyl-tRNA synthetase family. Type 1 subfamily. Homodimer.

The protein localises to the cytoplasm. The catalysed reaction is tRNA(Asp) + L-aspartate + ATP = L-aspartyl-tRNA(Asp) + AMP + diphosphate. Functionally, catalyzes the attachment of L-aspartate to tRNA(Asp) in a two-step reaction: L-aspartate is first activated by ATP to form Asp-AMP and then transferred to the acceptor end of tRNA(Asp). This Streptococcus thermophilus (strain ATCC BAA-250 / LMG 18311) protein is Aspartate--tRNA ligase.